The following is a 76-amino-acid chain: Attractin (76 aa).

Positions 1–18 (MKVAIIILSLALVAAVFA) are cleaved as a signal peptide. Cystine bridges form between cysteine 22–cysteine 59, cysteine 31–cysteine 51, and cysteine 38–cysteine 44. N-linked (GlcNAc...) asparagine glycosylation occurs at asparagine 26.

Binds to temptin and enticin. As to expression, produced by the albumen gland of the egg cordons.

Its subcellular location is the secreted. Functionally, water-borne pheromone that attract the marine mollusk Aplysia into breeding aggregations and coordinate male and female reproductive behavior within the aggregation. This is Attractin (ATT) from Aplysia californica (California sea hare).